A 487-amino-acid polypeptide reads, in one-letter code: Neuronal immunoglobulin domain-containing protein rig-3 (487 aa).

The signal sequence occupies residues 1–23; that stretch reads MGRLLAKMLFPLAMCLFVSAVSA. Ig-like domains are found at residues 34 to 139 and 247 to 354; these read PIVI…KTIK and PEFE…PKVT. Intrachain disulfides connect Cys61–Cys124 and Cys271–Cys327. Asp466 carries GPI-anchor amidated aspartate lipidation. A propeptide spans 467 to 487 (removed in mature form); the sequence is SASDSKFPLALATLFFVCLFI.

In terms of tissue distribution, expressed in the cholinergic motor neurons AS, VA and DA in the ventral nerve cord and in the mechanosensory ALM neurons in the midbody.

It is found in the cell projection. Its subcellular location is the axon. The protein localises to the synapse. It localises to the cell membrane. Functionally, cell surface protein which plays a role in the plasticity of cholinergic synapses at neuromuscular junctions and in the polarity of the mechanosensory neuron ALM, possibly by antagonizing Wnt signaling. The protein is Neuronal immunoglobulin domain-containing protein rig-3 of Caenorhabditis elegans.